We begin with the raw amino-acid sequence, 267 residues long: Urease accessory protein UreD (267 aa).

Belongs to the UreD family. UreD, UreF and UreG form a complex that acts as a GTP-hydrolysis-dependent molecular chaperone, activating the urease apoprotein by helping to assemble the nickel containing metallocenter of UreC. The UreE protein probably delivers the nickel.

It is found in the cytoplasm. Its function is as follows. Required for maturation of urease via the functional incorporation of the urease nickel metallocenter. This chain is Urease accessory protein UreD, found in Synechococcus sp. (strain JA-2-3B'a(2-13)) (Cyanobacteria bacterium Yellowstone B-Prime).